The primary structure comprises 499 residues: Glucose-6-phosphate exchanger SLC37A2 (499 aa).

Residues 21 to 40 (YRGFIIVMTFLFYTCYHMSR) form a helical membrane-spanning segment. 3 N-linked (GlcNAc...) asparagine glycosylation sites follow: Asn53, Asn62, and Asn66. A run of 11 helical transmembrane segments spans residues 86–106 (GSLD…SGIF), 116–136 (LSGG…GYYW), 138–158 (IHAL…QTTG), 187–207 (AVGN…AWGL), 208–228 (SFIV…FFLV), 302–322 (LCLL…PLYI), 334–354 (GDLS…AGGI), 362–382 (AITC…YNYL), 391–411 (VAML…ITTA), 434–454 (AIID…AGVL), and 458–478 (GWNY…LLLV).

The protein belongs to the major facilitator superfamily. Organophosphate:Pi antiporter (OPA) (TC 2.A.1.4) family.

Its subcellular location is the endoplasmic reticulum membrane. It carries out the reaction D-glucose 6-phosphate(in) + phosphate(out) = D-glucose 6-phosphate(out) + phosphate(in). Inorganic phosphate and glucose-6-phosphate antiporter. May transport cytoplasmic glucose-6-phosphate into the lumen of the endoplasmic reticulum and translocate inorganic phosphate into the opposite direction. The sequence is that of Glucose-6-phosphate exchanger SLC37A2 from Xenopus tropicalis (Western clawed frog).